A 328-amino-acid chain; its full sequence is D-cysteine desulfhydrase (328 aa).

An N6-(pyridoxal phosphate)lysine modification is found at Lys-51.

This sequence belongs to the ACC deaminase/D-cysteine desulfhydrase family. As to quaternary structure, homodimer. The cofactor is pyridoxal 5'-phosphate.

The enzyme catalyses D-cysteine + H2O = hydrogen sulfide + pyruvate + NH4(+) + H(+). Functionally, catalyzes the alpha,beta-elimination reaction of D-cysteine and of several D-cysteine derivatives. It could be a defense mechanism against D-cysteine. The chain is D-cysteine desulfhydrase from Shigella sonnei (strain Ss046).